The primary structure comprises 228 residues: Phosphoenolpyruvate guanylyltransferase (228 aa).

Phosphoenolpyruvate contacts are provided by T148, G164, and S167.

It belongs to the CofC family.

The catalysed reaction is phosphoenolpyruvate + GTP + H(+) = enolpyruvoyl-2-diphospho-5'-guanosine + diphosphate. Its pathway is cofactor biosynthesis; coenzyme F420 biosynthesis. Its function is as follows. Guanylyltransferase that catalyzes the activation of phosphoenolpyruvate (PEP) as enolpyruvoyl-2-diphospho-5'-guanosine, via the condensation of PEP with GTP. It is involved in the biosynthesis of coenzyme F420, a hydride carrier cofactor. In Thermomonospora curvata (strain ATCC 19995 / DSM 43183 / JCM 3096 / KCTC 9072 / NBRC 15933 / NCIMB 10081 / Henssen B9), this protein is Phosphoenolpyruvate guanylyltransferase.